Consider the following 177-residue polypeptide: O-acetyl-ADP-ribose deacetylase (177 aa).

Residues 1-175 (MNSRIHVIHG…LYQRLLTQQG (175 aa)) form the Macro domain. Residues 11-12 (DI), Asn25, 33-35 (GVD), and 122-126 (STGVY) each bind substrate. Catalysis depends on Asp35, which acts as the Proton acceptor.

Belongs to the MacroD-type family. YmdB subfamily. As to quaternary structure, homodimer. Interacts with RNase III.

The catalysed reaction is 3''-O-acetyl-ADP-D-ribose + H2O = ADP-D-ribose + acetate + H(+). It catalyses the reaction 2''-O-acetyl-ADP-D-ribose + H2O = ADP-D-ribose + acetate + H(+). Its function is as follows. Deacetylates O-acetyl-ADP ribose to yield ADP-ribose and free acetate. Down-regulates ribonuclease 3 (RNase III) activity. Acts by interacting directly with the region of the ribonuclease that is required for dimerization/activation. The protein is O-acetyl-ADP-ribose deacetylase of Citrobacter rodentium (strain ICC168) (Citrobacter freundii biotype 4280).